A 119-amino-acid polypeptide reads, in one-letter code: Ribonuclease P protein component (119 aa).

The protein belongs to the RnpA family. As to quaternary structure, consists of a catalytic RNA component (M1 or rnpB) and a protein subunit.

It catalyses the reaction Endonucleolytic cleavage of RNA, removing 5'-extranucleotides from tRNA precursor.. Its function is as follows. RNaseP catalyzes the removal of the 5'-leader sequence from pre-tRNA to produce the mature 5'-terminus. It can also cleave other RNA substrates such as 4.5S RNA. The protein component plays an auxiliary but essential role in vivo by binding to the 5'-leader sequence and broadening the substrate specificity of the ribozyme. The chain is Ribonuclease P protein component from Aeromonas hydrophila subsp. hydrophila (strain ATCC 7966 / DSM 30187 / BCRC 13018 / CCUG 14551 / JCM 1027 / KCTC 2358 / NCIMB 9240 / NCTC 8049).